The chain runs to 665 residues: Fructose-1,6-bisphosphatase class 3 (665 aa).

Belongs to the FBPase class 3 family. It depends on Mn(2+) as a cofactor.

The enzyme catalyses beta-D-fructose 1,6-bisphosphate + H2O = beta-D-fructose 6-phosphate + phosphate. The protein operates within carbohydrate biosynthesis; gluconeogenesis. The polypeptide is Fructose-1,6-bisphosphatase class 3 (Clostridium acetobutylicum (strain ATCC 824 / DSM 792 / JCM 1419 / IAM 19013 / LMG 5710 / NBRC 13948 / NRRL B-527 / VKM B-1787 / 2291 / W)).